The primary structure comprises 108 residues: MELVKICPEIGIVMDVDTGIVAEMRKDILVVDLNPIKEEINKLETLSKAFENSLDPRSAPLKAYDGRDNIYSVGGLFQSAFFGFWISLSILTLGLILVIGLYPKLIGL.

The chain crosses the membrane as a helical span at residues 81 to 101 (FFGFWISLSILTLGLILVIGL).

Belongs to the MtrB family. The complex is composed of 8 subunits; MtrA, MtrB, MtrC, MtrD, MtrE, MtrF, MtrG and MtrH.

Its subcellular location is the cell membrane. The catalysed reaction is 5-methyl-5,6,7,8-tetrahydromethanopterin + coenzyme M + 2 Na(+)(in) = 5,6,7,8-tetrahydromethanopterin + methyl-coenzyme M + 2 Na(+)(out). The protein operates within one-carbon metabolism; methanogenesis from CO(2); methyl-coenzyme M from 5,10-methylene-5,6,7,8-tetrahydromethanopterin: step 2/2. Its function is as follows. Part of a complex that catalyzes the formation of methyl-coenzyme M and tetrahydromethanopterin from coenzyme M and methyl-tetrahydromethanopterin. This is an energy-conserving, sodium-ion translocating step. In Methanococcus aeolicus (strain ATCC BAA-1280 / DSM 17508 / OCM 812 / Nankai-3), this protein is Tetrahydromethanopterin S-methyltransferase subunit B.